Reading from the N-terminus, the 589-residue chain is (E)-beta-ocimene synthase, chloroplastic (589 aa).

The transit peptide at 1–25 directs the protein to the chloroplast; sequence MAAHNLCFNSAFVCNVHHQKTQHFP. The (2E,6E)-farnesyl diphosphate site is built by arginine 302, aspartate 339, aspartate 343, arginine 480, and asparagine 483. Residues aspartate 339 and aspartate 343 each coordinate Mg(2+). Residues 339–343 carry the DDXXD motif motif; the sequence is DDIYD. 3 residues coordinate Mg(2+): asparagine 483, threonine 487, and glutamate 491.

Belongs to the terpene synthase family. Tpsb subfamily. Requires Mg(2+) as cofactor. It depends on Mn(2+) as a cofactor. Expressed exclusively in flowers.

The protein resides in the plastid. Its subcellular location is the chloroplast. It catalyses the reaction (2E,6E)-farnesyl diphosphate = (3E,6E)-alpha-farnesene + diphosphate. The protein operates within secondary metabolite biosynthesis; terpenoid biosynthesis. Its function is as follows. Predominantly involved in monoterpene (C10) biosynthesis. Using GPP as substrate, the major product is (E)-beta-ocimene with minor amounts of (Z)-beta-ocimene and myrcene. Using FPP as substrate, could also be able to synthesize in vitro sesquiterpenes (C15) with (E,E)-alpha-farnesene as the major product and with (Z,E)-alpha-farnesene and (E,E)-beta-farnesene as minor products. The chain is (E)-beta-ocimene synthase, chloroplastic (TPS02) from Arabidopsis thaliana (Mouse-ear cress).